A 441-amino-acid polypeptide reads, in one-letter code: UDP-N-acetylmuramoylalanine--D-glutamate ligase (441 aa).

Glycine 129 to threonine 135 is an ATP binding site.

The protein belongs to the MurCDEF family.

Its subcellular location is the cytoplasm. The enzyme catalyses UDP-N-acetyl-alpha-D-muramoyl-L-alanine + D-glutamate + ATP = UDP-N-acetyl-alpha-D-muramoyl-L-alanyl-D-glutamate + ADP + phosphate + H(+). It participates in cell wall biogenesis; peptidoglycan biosynthesis. Its function is as follows. Cell wall formation. Catalyzes the addition of glutamate to the nucleotide precursor UDP-N-acetylmuramoyl-L-alanine (UMA). This Zymomonas mobilis subsp. mobilis (strain ATCC 31821 / ZM4 / CP4) protein is UDP-N-acetylmuramoylalanine--D-glutamate ligase.